The following is a 246-amino-acid chain: Bromelain inhibitor (246 aa).

The first 19 residues, 1-19 (MNMLLLFLHEVINGERVTL), serve as a signal peptide directing secretion. 5 disulfide bridges follow: Cys-22–Cys-42, Cys-25–Cys-74, Cys-27–Cys-40, Cys-49–Cys-56, and Cys-53–Cys-65. Residues 31–35 (TSSSD) constitute a propeptide that is removed on maturation. 2 consecutive propeptides follow at residues 77 to 95 (PVSS…RVTL) and 107 to 111 (TSSSD). Disulfide bonds link Cys-98–Cys-118, Cys-101–Cys-150, Cys-103–Cys-116, Cys-125–Cys-132, and Cys-129–Cys-141. 2 propeptides span residues 153-171 (PVSS…RVTL) and 183-187 (TSSSD). Disulfide bonds link Cys-174–Cys-194, Cys-177–Cys-226, Cys-179–Cys-192, Cys-201–Cys-208, and Cys-205–Cys-217. Residues 229–246 (PVSSWEARQKIKLLQGRE) constitute a propeptide that is removed on maturation.

This sequence belongs to the protease inhibitor I67 family. Each inhibitor is composed of two chains, designated A and B linked by three disulfide bonds.

Functionally, weak inhibitor of cysteine proteinases. This chain is Bromelain inhibitor, found in Ananas comosus (Pineapple).